A 663-amino-acid chain; its full sequence is Subtilisin-like serine protease (663 aa).

The first 23 residues, 1–23, serve as a signal peptide directing secretion; the sequence is MKKFGAVVLALFLVGLMAGSVLA. A propeptide spans 24 to 136 (removed in mature form); sequence APQKPAVRNV…IQEDYVVKVA (113 aa). Residues 139–439 form the Peptidase S8 domain; the sequence is TEGLDESAAQ…AGRVNAYKAA (301 aa). Catalysis depends on charge relay system residues D170, H203, and S382. The Ca(2+) site is built by P420, I423, D483, L484, D485, D497, Y498, T501, and E507. The interval 537-565 is disordered; it reads VSDGSLGQPSGGGSEPSPSPSPEPTVDEK. Positions 563–663 are cleaved as a propeptide — removed in mature form; sequence DEKTFTGTVH…YQLDAKVYYG (101 aa).

Belongs to the peptidase S8 family. In terms of assembly, monomer.

It catalyses the reaction Hydrolysis of proteins with broad specificity for peptide bonds, and a preference for a large uncharged residue in P1. Hydrolyzes peptide amides.. With respect to regulation, resistant to treatment with 5% SDS, 8 M urea, 10% Triton X-100 or 10% Tween-20. Fully active although less stable in the presence of 10 mM EDTA. Activity not affected by the absence or presence of 10 mM CaCl(2). Unstable in the presence of 2 M or over GdnHCl and loses 35% and 99% of its activity upon incubation with 2 and 4 M GdnHCl, respectively, for 1 hour at 55 degrees Celsius. Nearly fully loses activity upon incubation at pH 2.0. Its function is as follows. Serine protease with a broad substrate specificity. The chain is Subtilisin-like serine protease from Thermococcus kodakarensis (strain ATCC BAA-918 / JCM 12380 / KOD1) (Pyrococcus kodakaraensis (strain KOD1)).